We begin with the raw amino-acid sequence, 715 residues long: Patatin-like phospholipase domain-containing protein ATEG_02594 (715 aa).

The chain crosses the membrane as a helical span at residues 84 to 104; that stretch reads WPFLAFVLGWISFLGVAYILT. The PNPLA domain maps to 274–465; that stretch reads LCLSGGATFA…RTDIPIKALN (192 aa). The GXSXG motif lies at 305-309; sequence GTSGG. Ser-307 serves as the catalytic Nucleophile. Residue Asp-452 is the Proton acceptor of the active site. The interval 613–715 is disordered; the sequence is TAPRGGGRAT…DVDSDTWKGQ (103 aa). A compositionally biased stretch (basic and acidic residues) spans 652–661; the sequence is RTGEYSKEAD. Over residues 665–678 the composition is skewed to polar residues; it reads AEMSDSSGVDSATA.

It belongs to the PLPL family.

It is found in the membrane. In terms of biological role, probable lipid hydrolase. The protein is Patatin-like phospholipase domain-containing protein ATEG_02594 of Aspergillus terreus (strain NIH 2624 / FGSC A1156).